We begin with the raw amino-acid sequence, 351 residues long: Photosystem II D2 protein (351 aa).

Residues 39–59 traverse the membrane as a helical segment; the sequence is CAYMAIGGWLTGTTFATSWYT. His-116 contributes to the chlorophyll a binding site. A helical transmembrane segment spans residues 123 to 139; sequence GFMLRQFEIARLVGVRP. Residues Gln-128 and Asn-141 each coordinate pheophytin a. A helical membrane pass occupies residues 151-164; that stretch reads LFVSVFLIYPLGQS. His-196 serves as a coordination point for chlorophyll a. Residues 206 to 226 form a helical membrane-spanning segment; the sequence is GALLCAIHGATVENTLFEDGD. A plastoquinone-binding residues include His-213 and Phe-260. His-213 contributes to the Fe cation binding site. His-267 lines the Fe cation pocket. Residues 277-293 traverse the membrane as a helical segment; that stretch reads GLWMSAIGVVGLALNLR.

The protein belongs to the reaction center PufL/M/PsbA/D family. In terms of assembly, PSII is composed of 1 copy each of membrane proteins PsbA, PsbB, PsbC, PsbD, PsbE, PsbF, PsbH, PsbI, PsbJ, PsbK, PsbL, PsbM, PsbT, PsbX, PsbY, PsbZ, Psb30/Ycf12, peripheral proteins PsbO, CyanoQ (PsbQ), PsbU, PsbV and a large number of cofactors. It forms dimeric complexes. The D1/D2 heterodimer binds P680, chlorophylls that are the primary electron donor of PSII, and subsequent electron acceptors. It shares a non-heme iron and each subunit binds pheophytin, quinone, additional chlorophylls, carotenoids and lipids. There is also a Cl(-1) ion associated with D1 and D2, which is required for oxygen evolution. The PSII complex binds additional chlorophylls, carotenoids and specific lipids. serves as cofactor.

It localises to the cellular thylakoid membrane. It catalyses the reaction 2 a plastoquinone + 4 hnu + 2 H2O = 2 a plastoquinol + O2. In terms of biological role, photosystem II (PSII) is a light-driven water:plastoquinone oxidoreductase that uses light energy to abstract electrons from H(2)O, generating O(2) and a proton gradient subsequently used for ATP formation. It consists of a core antenna complex that captures photons, and an electron transfer chain that converts photonic excitation into a charge separation. The D1/D2 (PsbA/PsbD) reaction center heterodimer binds P680, the primary electron donor of PSII as well as several subsequent electron acceptors. D2 is needed for assembly of a stable PSII complex. The protein is Photosystem II D2 protein of Prochlorothrix hollandica.